We begin with the raw amino-acid sequence, 1044 residues long: MPPGVDCPMEFWTKEENQSVVVDFLLPTGVYLNFPVSRNANLSTIKQLLWHRAQYEPLFHMLSGPEAYVFTCINQTAEQQELEDEQRRLCDVQPFLPVLRLVAREGDRVKKLINSQISLLIGKGLHEFDSLCDPEVNDFRAKMCQFCEEAAARRQQLGWEAWLQYSFPLQLEPSAQTWGPGTLRLPNRALLVNVKFEGSEESFTFQVSTKDVPLALMACALRKKATVFRQPLVEQPEDYTLQVNGRHEYLYGSYPLCQFQYICSCLHSGLTPHLTMVHSSSILAMRDEQSNPAPQVQKPRAKPPPIPAKKPSSVSLWSLEQPFRIELIQGSKVNADERMKLVVQAGLFHGNEMLCKTVSSSEVSVCSEPVWKQRLEFDINICDLPRMARLCFALYAVIEKAKKARSTKKKSKKADCPIAWANLMLFDYKDQLKTGERCLYMWPSVPDEKGELLNPTGTVRSNPNTDSAAALLICLPEVAPHPVYYPALEKILELGRHSECVHVTEEEQLQLREILERRGSGELYEHEKDLVWKLRHEVQEHFPEALARLLLVTKWNKHEDVAQMLYLLCSWPELPVLSALELLDFSFPDCHVGSFAIKSLRKLTDDELFQYLLQLVQVLKYESYLDCELTKFLLDRALANRKIGHFLFWHLRSEMHVPSVALRFGLILEAYCRGSTHHMKVLMKQGEALSKLKALNDFVKLSSQKTPKPQTKELMHLCMRQEAYLEALSHLQSPLDPSTLLAEVCVEQCTFMDSKMKPLWIMYSNEEAGSGGSVGIIFKNGDDLRQDMLTLQMIQLMDVLWKQEGLDLRMTPYGCLPTGDRTGLIEVVLRSDTIANIQLNKSNMAATAAFNKDALLNWLKSKNPGEALDRAIEEFTLSCAGYCVATYVLGIGDRHSDNIMIRESGQLFHIDFGHFLGNFKTKFGINRERVPFILTYDFVHVIQQGKTNNSEKFERFRGYCERAYTILRRHGLLFLHLFALMRAAGLPELSCSKDIQYLKDSLALGKTEEEALKHFRVKFNEALRESWKTKVNWLAHNVSKDNRQ.

The 90-residue stretch at 16-105 folds into the PI3K-ABD domain; sequence ENQSVVVDFL…LPVLRLVARE (90 aa). Positions 187-278 constitute a PI3K-RBD domain; sequence NRALLVNVKF…GLTPHLTMVH (92 aa). Residues 287–312 form a disordered region; the sequence is DEQSNPAPQVQKPRAKPPPIPAKKPS. Positions 319–476 constitute a C2 PI3K-type domain; it reads LEQPFRIELI…SAAALLICLP (158 aa). Positions 497 to 674 constitute a PIK helical domain; that stretch reads HSECVHVTEE…GLILEAYCRG (178 aa). Tyrosine 524 carries the post-translational modification Phosphotyrosine. One can recognise a PI3K/PI4K catalytic domain in the interval 745-1027; the sequence is CVEQCTFMDS…KFNEALRESW (283 aa). The tract at residues 751–757 is G-loop; sequence FMDSKMK. The segment at 890–898 is catalytic loop; that stretch reads GIGDRHSDN. The activation loop stretch occupies residues 909 to 935; the sequence is HIDFGHFLGNFKTKFGINRERVPFILT. Serine 1039 carries the phosphoserine; by autocatalysis modification.

It belongs to the PI3/PI4-kinase family. In terms of assembly, heterodimer of a catalytic subunit PIK3CD and a p85 regulatory subunit (PIK3R1, PIK3R2 or PIK3R3). Interacts with ERAS. Interacts with HRAS. Autophosphorylation on Ser-1039 results in the almost complete inactivation of the lipid kinase activity. In terms of tissue distribution, in humans, the highest levels of expression are seen in peripheral blood mononuclear cells, spleen, and thymus, and low levels of expression in testes, uterus, colon, and small intestine but not in other tissues examined including prostate, heart, brain, and liver. Isoform 2 is expressed in normal thymus, lung and spleen tissues, and is detected at low levels in normal lysates from colon and ovarian biopsies, at elevated levels in lysates from colorectal tumors and is abundantly expressed in some ovarian tumors (at protein level). Both isoform 1 and isoform 2 are widely expressed. Isoform 1 is expressed predominantly in leukocytes.

Its subcellular location is the cytoplasm. The catalysed reaction is a 1,2-diacyl-sn-glycero-3-phospho-(1D-myo-inositol-4,5-bisphosphate) + ATP = a 1,2-diacyl-sn-glycero-3-phospho-(1D-myo-inositol-3,4,5-trisphosphate) + ADP + H(+). It catalyses the reaction a 1,2-diacyl-sn-glycero-3-phospho-(1D-myo-inositol) + ATP = a 1,2-diacyl-sn-glycero-3-phospho-(1D-myo-inositol-3-phosphate) + ADP + H(+). It carries out the reaction 1-octadecanoyl-2-(5Z,8Z,11Z,14Z)-eicosatetraenoyl-sn-glycero-3-phospho-1D-myo-inositol 4,5-bisphosphate + ATP = 1-octadecanoyl-2-(5Z,8Z,11Z,14Z-eicosatetraenoyl)-sn-glycero-3-phospho-(1D-myo-inositol 3,4,5-triphosphate) + ADP + H(+). Its pathway is phospholipid metabolism; phosphatidylinositol phosphate biosynthesis. With respect to regulation, activated by growth factors and cytokine receptors through a tyrosine-kinase-dependent mechanism. Activated by RAS. IC87114 inhibits lipid kinase activity and is selective in cells at doses up to 5-10 uM. IC87114 blocks T-cell receptor signaling in naive and memory T-cells and reduces cytokine production by memory T-cells. Its function is as follows. Phosphoinositide-3-kinase (PI3K) phosphorylates phosphatidylinositol (PI) and its phosphorylated derivatives at position 3 of the inositol ring to produce 3-phosphoinositides. Uses ATP and PtdIns(4,5)P2 (phosphatidylinositol 4,5-bisphosphate) to generate phosphatidylinositol 3,4,5-trisphosphate (PIP3). PIP3 plays a key role by recruiting PH domain-containing proteins to the membrane, including AKT1 and PDPK1, activating signaling cascades involved in cell growth, survival, proliferation, motility and morphology. Mediates immune responses. Plays a role in B-cell development, proliferation, migration, and function. Required for B-cell receptor (BCR) signaling. Mediates B-cell proliferation response to anti-IgM, anti-CD40 and IL4 stimulation. Promotes cytokine production in response to TLR4 and TLR9. Required for antibody class switch mediated by TLR9. Involved in the antigen presentation function of B-cells. Involved in B-cell chemotaxis in response to CXCL13 and sphingosine 1-phosphate (S1P). Required for proliferation, signaling and cytokine production of naive, effector and memory T-cells. Required for T-cell receptor (TCR) signaling. Mediates TCR signaling events at the immune synapse. Activation by TCR leads to antigen-dependent memory T-cell migration and retention to antigenic tissues. Together with PIK3CG participates in T-cell development. Contributes to T-helper cell expansion and differentiation. Required for T-cell migration mediated by homing receptors SELL/CD62L, CCR7 and S1PR1 and antigen dependent recruitment of T-cells. Together with PIK3CG is involved in natural killer (NK) cell development and migration towards the sites of inflammation. Participates in NK cell receptor activation. Plays a role in NK cell maturation and cytokine production. Together with PIK3CG is involved in neutrophil chemotaxis and extravasation. Together with PIK3CG participates in neutrophil respiratory burst. Plays important roles in mast-cell development and mast cell mediated allergic response. Involved in stem cell factor (SCF)-mediated proliferation, adhesion and migration. Required for allergen-IgE-induced degranulation and cytokine release. The lipid kinase activity is required for its biological function. Isoform 2 may be involved in stabilizing total RAS levels, resulting in increased ERK phosphorylation and increased PI3K activity. The sequence is that of Phosphatidylinositol 4,5-bisphosphate 3-kinase catalytic subunit delta isoform (PIK3CD) from Homo sapiens (Human).